The sequence spans 328 residues: Thiamine thiazole synthase (328 aa).

Residues A87, 108-109 (EA), G116, and V181 each bind substrate. The residue at position 215 (C215) is a 2,3-didehydroalanine (Cys). Residues D217, H232, M284, and 294–296 (RMG) contribute to the substrate site.

This sequence belongs to the THI4 family. In terms of assembly, homooctamer. Requires Fe cation as cofactor. During the catalytic reaction, a sulfide is transferred from Cys-215 to a reaction intermediate, generating a dehydroalanine residue.

The protein localises to the cytoplasm. Its subcellular location is the nucleus. The enzyme catalyses [ADP-thiazole synthase]-L-cysteine + glycine + NAD(+) = [ADP-thiazole synthase]-dehydroalanine + ADP-5-ethyl-4-methylthiazole-2-carboxylate + nicotinamide + 3 H2O + 2 H(+). In terms of biological role, involved in biosynthesis of the thiamine precursor thiazole. Catalyzes the conversion of NAD and glycine to adenosine diphosphate 5-(2-hydroxyethyl)-4-methylthiazole-2-carboxylic acid (ADT), an adenylated thiazole intermediate. The reaction includes an iron-dependent sulfide transfer from a conserved cysteine residue of the protein to a thiazole intermediate. The enzyme can only undergo a single turnover, which suggests it is a suicide enzyme. May have additional roles in adaptation to various stress conditions and in DNA damage tolerance. This is Thiamine thiazole synthase (thi2) from Schizosaccharomyces pombe (strain 972 / ATCC 24843) (Fission yeast).